The following is a 209-amino-acid chain: Potassium-transporting ATPase KdpC subunit (209 aa).

The helical transmembrane segment at 18-38 (ALALFVLLGLGLGYSLVATGI) threads the bilayer.

The protein belongs to the KdpC family. The system is composed of three essential subunits: KdpA, KdpB and KdpC.

It is found in the cell inner membrane. In terms of biological role, part of the high-affinity ATP-driven potassium transport (or Kdp) system, which catalyzes the hydrolysis of ATP coupled with the electrogenic transport of potassium into the cytoplasm. This subunit acts as a catalytic chaperone that increases the ATP-binding affinity of the ATP-hydrolyzing subunit KdpB by the formation of a transient KdpB/KdpC/ATP ternary complex. In Xanthomonas campestris pv. campestris (strain 8004), this protein is Potassium-transporting ATPase KdpC subunit.